A 392-amino-acid polypeptide reads, in one-letter code: L-rhamnonate dehydratase (392 aa).

The substrate site is built by His-22 and Arg-48. Mg(2+) contacts are provided by Asp-214, Glu-240, and Glu-268. The Proton acceptor role is filled by His-318. Glu-338 lines the substrate pocket.

It belongs to the mandelate racemase/muconate lactonizing enzyme family. RhamD subfamily. Homooctamer; tetramer of dimers. The cofactor is Mg(2+).

The catalysed reaction is L-rhamnonate = 2-dehydro-3-deoxy-L-rhamnonate + H2O. Catalyzes the dehydration of L-rhamnonate to 2-keto-3-deoxy-L-rhamnonate (KDR). In Paraburkholderia phymatum (strain DSM 17167 / CIP 108236 / LMG 21445 / STM815) (Burkholderia phymatum), this protein is L-rhamnonate dehydratase.